A 500-amino-acid chain; its full sequence is Chromosomal replication initiator protein DnaA (500 aa).

Positions 1 to 81 are domain I, interacts with DnaA modulators; sequence MVNASGDPVI…LQALRTVTGE (81 aa). Residues 81–155 are domain II; sequence ENMFPAFKVV…QQKMNRDPET (75 aa). Positions 156-377 are domain III, AAA+ region; that stretch reads HLNKNFTFDS…GALTRVTAVA (222 aa). Glycine 200, glycine 202, lysine 203, and threonine 204 together coordinate ATP. The segment at 378–500 is domain IV, binds dsDNA; it reads SLSNQPVTRA…TVRLKQSNTN (123 aa).

This sequence belongs to the DnaA family. In terms of assembly, oligomerizes as a right-handed, spiral filament on DNA at oriC.

It is found in the cytoplasm. Functionally, plays an essential role in the initiation and regulation of chromosomal replication. ATP-DnaA binds to the origin of replication (oriC) to initiate formation of the DNA replication initiation complex once per cell cycle. Binds the DnaA box (a 9 base pair repeat at the origin) and separates the double-stranded (ds)DNA. Forms a right-handed helical filament on oriC DNA; dsDNA binds to the exterior of the filament while single-stranded (ss)DNA is stabiized in the filament's interior. The ATP-DnaA-oriC complex binds and stabilizes one strand of the AT-rich DNA unwinding element (DUE), permitting loading of DNA polymerase. After initiation quickly degrades to an ADP-DnaA complex that is not apt for DNA replication. Binds acidic phospholipids. The polypeptide is Chromosomal replication initiator protein DnaA (Bifidobacterium longum (strain DJO10A)).